The sequence spans 139 residues: Large ribosomal subunit protein uL16 (139 aa).

The tract at residues 1–23 (MLQPARTKYRKMHKGRMPGSAHR) is disordered. A compositionally biased stretch (basic residues) spans 7–16 (TKYRKMHKGR).

It belongs to the universal ribosomal protein uL16 family. In terms of assembly, part of the 50S ribosomal subunit.

Binds 23S rRNA and is also seen to make contacts with the A and possibly P site tRNAs. This Myxococcus xanthus (strain DK1622) protein is Large ribosomal subunit protein uL16.